The sequence spans 609 residues: Protein tesmin/TSO1-like CXC 3 (609 aa).

The span at 69–84 (ESRFRSQKDVSASKEV) shows a compositional bias: basic and acidic residues. Disordered stretches follow at residues 69–102 (ESRF…YKND), 307–328 (PISP…SSCK), 457–477 (LFEQ…KTQQ), and 569–609 (NSKR…TPHH). The CRC domain occupies 326-451 (SCKRCNCKKS…RCEGCKNAFG (126 aa)). The segment covering 466–477 (TSGTPGTKKTQQ) has biased composition (polar residues).

Belongs to the lin-54 family. Ubiquitous but expressed mostly in flowers and at significant levels in leaves. Detected with highest levels in developing ovules and microspores, and in petals.

It localises to the nucleus. Plays a role in development of both male and female reproductive tissues. The sequence is that of Protein tesmin/TSO1-like CXC 3 (TCX3) from Arabidopsis thaliana (Mouse-ear cress).